The primary structure comprises 430 residues: Probable protein phosphatase 1N (430 aa).

A disordered region spans residues 16–65; that stretch reads CKKKEREKEGREEEEEEEAGRRAPEGPRSLLTAPRRAQRPHGGAEASGGL. Basic and acidic residues predominate over residues 17 to 26; sequence KKKEREKEGR. Positions 66-326 constitute a PPM-type phosphatase domain; that stretch reads RFGASAAQGW…DNMTCILVCF (261 aa). Residues D103, G104, D274, and D317 each coordinate Mn(2+). The interval 407 to 430 is disordered; sequence GEKGQDGAGKSNPTHLGSALDMEA.

The protein belongs to the PP2C family. Mg(2+) serves as cofactor. Mn(2+) is required as a cofactor.

It catalyses the reaction O-phospho-L-seryl-[protein] + H2O = L-seryl-[protein] + phosphate. The catalysed reaction is O-phospho-L-threonyl-[protein] + H2O = L-threonyl-[protein] + phosphate. This is Probable protein phosphatase 1N (PPM1N) from Homo sapiens (Human).